The sequence spans 660 residues: Pescadillo homolog (660 aa).

2 disordered regions span residues 313–358 and 471–660; these read VESD…SYSS and PELY…EKKA. Positions 331-342 are enriched in basic and acidic residues; it reads EEKPSDAIDKFE. Positions 360–476 constitute a BRCT domain; sequence DPAQLFSRLT…ELKSPELYGP (117 aa). Residues 501–659 adopt a coiled-coil conformation; that stretch reads LEEQQSEGEA…KRRRLEKEKK (159 aa). Acidic residues predominate over residues 504 to 566; the sequence is QQSEGEAIDA…EEGSEDEEES (63 aa). A compositionally biased stretch (basic and acidic residues) spans 584-619; the sequence is VKGDKKMDAKTKAKLEAKKALERKKKSEAEDLERAK.

This sequence belongs to the pescadillo family. As to quaternary structure, component of the NOP7 complex, composed of ERB1, NOP7 and YTM1. The complex is held together by ERB1, which interacts with NOP7 via its N-terminal domain and with YTM1 via a high-affinity interaction between the seven-bladed beta-propeller domains of the 2 proteins. The NOP7 complex associates with the 66S pre-ribosome.

The protein resides in the nucleus. Its subcellular location is the nucleolus. It is found in the nucleoplasm. Its function is as follows. Component of the NOP7 complex, which is required for maturation of the 25S and 5.8S ribosomal RNAs and formation of the 60S ribosome. This chain is Pescadillo homolog, found in Chaetomium globosum (strain ATCC 6205 / CBS 148.51 / DSM 1962 / NBRC 6347 / NRRL 1970) (Soil fungus).